The primary structure comprises 272 residues: Dermonecrotic toxin LvSicTox-alphaIC1bv (272 aa).

The active site involves histidine 5. Residues glutamate 25 and aspartate 27 each coordinate Mg(2+). The active-site Nucleophile is the histidine 41. 2 cysteine pairs are disulfide-bonded: cysteine 45/cysteine 51 and cysteine 47/cysteine 189. Residue aspartate 84 coordinates Mg(2+).

The protein belongs to the arthropod phospholipase D family. Class II subfamily. Mg(2+) serves as cofactor. Expressed by the venom gland.

It is found in the secreted. It carries out the reaction an N-(acyl)-sphingosylphosphocholine = an N-(acyl)-sphingosyl-1,3-cyclic phosphate + choline. The enzyme catalyses an N-(acyl)-sphingosylphosphoethanolamine = an N-(acyl)-sphingosyl-1,3-cyclic phosphate + ethanolamine. It catalyses the reaction a 1-acyl-sn-glycero-3-phosphocholine = a 1-acyl-sn-glycero-2,3-cyclic phosphate + choline. The catalysed reaction is a 1-acyl-sn-glycero-3-phosphoethanolamine = a 1-acyl-sn-glycero-2,3-cyclic phosphate + ethanolamine. Functionally, dermonecrotic toxins cleave the phosphodiester linkage between the phosphate and headgroup of certain phospholipids (sphingolipid and lysolipid substrates), forming an alcohol (often choline) and a cyclic phosphate. This toxin acts on sphingomyelin (SM). It may also act on ceramide phosphoethanolamine (CPE), lysophosphatidylcholine (LPC) and lysophosphatidylethanolamine (LPE), but not on lysophosphatidylserine (LPS), and lysophosphatidylglycerol (LPG). It acts by transphosphatidylation, releasing exclusively cyclic phosphate products as second products. Induces dermonecrosis, hemolysis, increased vascular permeability, edema, inflammatory response, and platelet aggregation. The sequence is that of Dermonecrotic toxin LvSicTox-alphaIC1bv from Loxosceles variegata (Recluse spider).